The chain runs to 296 residues: Bidirectional sugar transporter SWEET13 (296 aa).

Residues 1 to 9 (MAGLSLQHP) lie on the Extracellular side of the membrane. A helical transmembrane segment spans residues 10 to 30 (WAFAFGLLGNLISFTTYLAPI). Residues 13 to 98 (AFGLLGNLIS…VMYLAYAPKK (86 aa)) enclose the MtN3/slv 1 domain. The Cytoplasmic segment spans residues 31–45 (PTFYRIYKSKSTEGF). Residues 46 to 66 (QSVPYVVALFSAMLWIFYALI) traverse the membrane as a helical segment. Residues 67 to 71 (KSNEA) are Extracellular-facing. Residues 72 to 92 (LLITINAAGCVIETIYIVMYL) form a helical membrane-spanning segment. The Cytoplasmic segment spans residues 93-105 (AYAPKKAKVFTTK). The chain crosses the membrane as a helical span at residues 106–126 (ILLLLNVGVFGVILLLTLLLS). Residues 127–133 (HGEQRVV) lie on the Extracellular side of the membrane. The chain crosses the membrane as a helical span at residues 134 to 154 (SLGWVCVAFSVSVFVAPLSII). In terms of domain architecture, MtN3/slv 2 spans 134-217 (SLGWVCVAFS…MGLYVFYMNA (84 aa)). Residues 155-167 (KRVIQSRSVEYMP) lie on the Cytoplasmic side of the membrane. Residues 168-188 (FSLSLTLTLSAVVWFLYGLLI) form a helical membrane-spanning segment. Topologically, residues 189 to 192 (KDKY) are extracellular. A helical membrane pass occupies residues 193-213 (VALPNILGFTFGVVQMGLYVF). The Cytoplasmic portion of the chain corresponds to 214–296 (YMNATPVAGE…PPRAVEVAAV (83 aa)).

The protein belongs to the SWEET sugar transporter family. Forms homooligomers and/or heterooligomers.

It localises to the cell membrane. In terms of biological role, mediates both low-affinity uptake and efflux of sugar across the plasma membrane. Functionally, confers blight susceptibility. Confers TAL effector-mediated susceptibility to Xanthomonas oryzae pv. oryzae. In Oryza sativa subsp. japonica (Rice), this protein is Bidirectional sugar transporter SWEET13 (SWEET13).